A 157-amino-acid chain; its full sequence is Transcription factor HES-2 (157 aa).

Residues 13–70 form the bHLH domain; the sequence is LRKNLKPLLEKRRRARINESLSQLKGLVLPLLGAETSRSSKLEKADILEMTVRFLQEQ. The 34-residue stretch at 86-119 folds into the Orange domain; sequence YLEGYRACLARLARVLPACSVLEPAVSARLLEHL. Positions 124 to 157 are disordered; the sequence is VSDDSPSLTLPPAPAPAPSPPVPPPGSSGLWRPW. Residues 132 to 149 are compositionally biased toward pro residues; sequence TLPPAPAPAPSPPVPPPG. The WRPW motif signature appears at 154–157; the sequence is WRPW.

In terms of assembly, transcription repression requires formation of a complex with a corepressor protein of the Groucho/TLE family.

Its subcellular location is the nucleus. Its function is as follows. Transcriptional repressor of genes that require a bHLH protein for their transcription. This is Transcription factor HES-2 (Hes2) from Mus musculus (Mouse).